The following is a 177-amino-acid chain: Peptide methionine sulfoxide reductase MsrA (177 aa).

Cysteine 11 is an active-site residue.

This sequence belongs to the MsrA Met sulfoxide reductase family.

The enzyme catalyses L-methionyl-[protein] + [thioredoxin]-disulfide + H2O = L-methionyl-(S)-S-oxide-[protein] + [thioredoxin]-dithiol. It catalyses the reaction [thioredoxin]-disulfide + L-methionine + H2O = L-methionine (S)-S-oxide + [thioredoxin]-dithiol. In terms of biological role, has an important function as a repair enzyme for proteins that have been inactivated by oxidation. Catalyzes the reversible oxidation-reduction of methionine sulfoxide in proteins to methionine. This chain is Peptide methionine sulfoxide reductase MsrA, found in Trichodesmium erythraeum (strain IMS101).